We begin with the raw amino-acid sequence, 364 residues long: Probable dual-specificity RNA methyltransferase RlmN (364 aa).

Glutamate 109 acts as the Proton acceptor in catalysis. The Radical SAM core domain maps to 123-351; that stretch reads PKARLTVCVS…VSVRYSRGLE (229 aa). Cysteine 130 and cysteine 356 are disulfide-bonded. Residues cysteine 137, cysteine 141, and cysteine 144 each contribute to the [4Fe-4S] cluster site. Residues 184 to 185, serine 214, 237 to 239, and asparagine 313 each bind S-adenosyl-L-methionine; these read GE and SLH. Cysteine 356 acts as the S-methylcysteine intermediate in catalysis.

The protein belongs to the radical SAM superfamily. RlmN family. [4Fe-4S] cluster is required as a cofactor.

The protein localises to the cytoplasm. The catalysed reaction is adenosine(2503) in 23S rRNA + 2 reduced [2Fe-2S]-[ferredoxin] + 2 S-adenosyl-L-methionine = 2-methyladenosine(2503) in 23S rRNA + 5'-deoxyadenosine + L-methionine + 2 oxidized [2Fe-2S]-[ferredoxin] + S-adenosyl-L-homocysteine. The enzyme catalyses adenosine(37) in tRNA + 2 reduced [2Fe-2S]-[ferredoxin] + 2 S-adenosyl-L-methionine = 2-methyladenosine(37) in tRNA + 5'-deoxyadenosine + L-methionine + 2 oxidized [2Fe-2S]-[ferredoxin] + S-adenosyl-L-homocysteine. Specifically methylates position 2 of adenine 2503 in 23S rRNA and position 2 of adenine 37 in tRNAs. The chain is Probable dual-specificity RNA methyltransferase RlmN from Nostoc punctiforme (strain ATCC 29133 / PCC 73102).